The chain runs to 694 residues: MAREYKIEDYRNFGIMAHIDAGKTTMTERILFYTGKNHKIGETHDGASTMDWMEQEQERGITITSAATTTFWQGRDGKKRRFNIIDTPGHVDFTIEVERSLRVLDGAIALLDANAGVEPQTETVWRQAEKYHVPRMVFVNKMDKIGADFYRSVEMVGSRLGAVALPVQLPIGAENDFVGVVDLIEMKALTWDGTIGAPATVGEIPADMADKAEEYREKLIELAVEIDEAAMEAYLEGTMPTNDELRALIRKGTIEVKFHPILCGTAFKNRGVQPLLDAVVEFLPAPTDVPAIKGIDVKTETETTRESSDEAPLSMLAFKIMNDPFVGSLTFARIYSGKLTKGVSLENTVKGKRERIGRMLQMHSNSREDIDEAFAGDIVALAGLKETTTGDTLCDPLKPVILERMEFPDPVIEIAIEPKTKADQEKMGIALNRLAAEDPSFRVKSDEESGQTIIAGMGELHLDILVDRMKREFKVEANVGAPQVAYRESITRAAEIDYTHKKQSGGSGQFARVKIIFEPHDGDDFIFESKIVGGSVPKEYIPGVQKGIESVMGAGPLAGFPMLGVKATLIDGAYHDVDSSVLAFEIASRAAFREGAQKAGAQLLEPIMKVEVVTPEDYVGDVIGDLNSRRGQISGTEARGIAAVVNAMVPLANMFGYVNSLRSMSQGRAQYTMQFDHYEPVPTAVAQEIQKKFA.

The tr-type G domain maps to 8–287 (EDYRNFGIMA…AVVEFLPAPT (280 aa)). GTP is bound by residues 17-24 (AHIDAGKT), 86-90 (DTPGH), and 140-143 (NKMD).

This sequence belongs to the TRAFAC class translation factor GTPase superfamily. Classic translation factor GTPase family. EF-G/EF-2 subfamily.

The protein localises to the cytoplasm. Catalyzes the GTP-dependent ribosomal translocation step during translation elongation. During this step, the ribosome changes from the pre-translocational (PRE) to the post-translocational (POST) state as the newly formed A-site-bound peptidyl-tRNA and P-site-bound deacylated tRNA move to the P and E sites, respectively. Catalyzes the coordinated movement of the two tRNA molecules, the mRNA and conformational changes in the ribosome. This is Elongation factor G from Brucella abortus (strain S19).